The following is a 197-amino-acid chain: Ribonuclease HII (197 aa).

The RNase H type-2 domain occupies Glu-10 to Leu-197. A divalent metal cation is bound by residues Asp-16, Glu-17, and Asp-108.

Belongs to the RNase HII family. The cofactor is Mn(2+). It depends on Mg(2+) as a cofactor.

The protein resides in the cytoplasm. The enzyme catalyses Endonucleolytic cleavage to 5'-phosphomonoester.. Functionally, endonuclease that specifically degrades the RNA of RNA-DNA hybrids. The sequence is that of Ribonuclease HII (rnhB) from Pasteurella multocida (strain Pm70).